Reading from the N-terminus, the 107-residue chain is MDQTVYSNIPRYTYDPYYTDNPYYGGWAYGTLDPYRRCGGYGGYGAFAIPPWRGLNSYEGFGKVYRPWAGRSLLVAPAIYRAGSGPVGSTPWGSGRQVNAARPIGGR.

Residues 88–107 (GSTPWGSGRQVNAARPIGGR) form a disordered region.

It localises to the virion. This is an uncharacterized protein from Acanthamoeba polyphaga (Amoeba).